The sequence spans 281 residues: MIKIAVPNKGSLSEAALEILKEAGYKGRGHNKSLNVVDEENGVEFFFLRPKDIAIYVAQGVLDLGITGRDLALDSRAKFNEVLALNFGGSTFRYAAPAGEEWDVAKLQGKRIATSYPNVVRDHLAANGIDAEVIRLDGAVEISIHLGVADVIADVVSTGTTLRQQGLEPFGEPIVTSEAVVIKREGEDVTADENVVLSRIRGILNARHYVMLDYNVAEEKLPNVEAVTPGLTGPTISPLAREGWVAVRVMVPRKLANQVMDSLEELGAEAILASDLRIARF.

It belongs to the ATP phosphoribosyltransferase family. Long subfamily. Mg(2+) is required as a cofactor.

The protein resides in the cytoplasm. The enzyme catalyses 1-(5-phospho-beta-D-ribosyl)-ATP + diphosphate = 5-phospho-alpha-D-ribose 1-diphosphate + ATP. Its pathway is amino-acid biosynthesis; L-histidine biosynthesis; L-histidine from 5-phospho-alpha-D-ribose 1-diphosphate: step 1/9. Its activity is regulated as follows. Feedback inhibited by histidine. Its function is as follows. Catalyzes the condensation of ATP and 5-phosphoribose 1-diphosphate to form N'-(5'-phosphoribosyl)-ATP (PR-ATP). Has a crucial role in the pathway because the rate of histidine biosynthesis seems to be controlled primarily by regulation of HisG enzymatic activity. This is ATP phosphoribosyltransferase from Corynebacterium aurimucosum (strain ATCC 700975 / DSM 44827 / CIP 107346 / CN-1) (Corynebacterium nigricans).